The primary structure comprises 167 residues: MFDFSFPTPASAGTRMGPASCGGRSLHLPQLRFSRVDATAVTDVPFQRMHAPHRAPEVFCSRSSRGAGRGHPTPTPRVRWALAGNQPRCCAQLLSGRGGSGAQLRAGWVRGAAVGNLFILLLGKEDGEEEGTVLSYSSMVHISNITGIVGTTVSRTKPALVLMELTF.

The segment at 1 to 21 (MFDFSFPTPASAGTRMGPASC) is disordered.

This is an uncharacterized protein from Homo sapiens (Human).